The following is a 372-amino-acid chain: Aminodeoxyfutalosine synthase (372 aa).

One can recognise a Radical SAM core domain in the interval 53–292; it reads HKTYFVHSIR…VARLYLDNFP (240 aa). Residues Cys69, Cys73, and Cys76 each contribute to the [4Fe-4S] cluster site.

It belongs to the radical SAM superfamily. MqnE family. It depends on [4Fe-4S] cluster as a cofactor.

It catalyses the reaction 3-[(1-carboxyvinyl)-oxy]benzoate + S-adenosyl-L-methionine + H2O = 6-amino-6-deoxyfutalosine + hydrogencarbonate + L-methionine + H(+). It functions in the pathway quinol/quinone metabolism; menaquinone biosynthesis. Radical SAM enzyme that catalyzes the addition of the adenosyl radical to the double bond of 3-[(1-carboxyvinyl)oxy]benzoate, leading to aminodeoxyfutalosine (AFL), a key intermediate in the formation of menaquinone (MK, vitamin K2) from chorismate. The sequence is that of Aminodeoxyfutalosine synthase from Thermus thermophilus (strain ATCC 27634 / DSM 579 / HB8).